Consider the following 300-residue polypeptide: GTPase Era (300 aa).

In terms of domain architecture, Era-type G spans 8–176 (RCGYVAIVGR…EGLIAKHLPE (169 aa)). The G1 stretch occupies residues 16–23 (GRPNVGKS). 16–23 (GRPNVGKS) lines the GTP pocket. Residues 42–46 (QTTRH) are G2. Positions 63 to 66 (DTPG) are G3. GTP is bound by residues 63 to 67 (DTPGM) and 125 to 128 (NKTD). The G4 stretch occupies residues 125 to 128 (NKTD). The interval 155–157 (VSA) is G5. Positions 199–283 (VREKIMRQLG…MLNLWVKVKG (85 aa)) constitute a KH type-2 domain.

It belongs to the TRAFAC class TrmE-Era-EngA-EngB-Septin-like GTPase superfamily. Era GTPase family. As to quaternary structure, monomer.

It is found in the cytoplasm. Its subcellular location is the cell inner membrane. Its function is as follows. An essential GTPase that binds both GDP and GTP, with rapid nucleotide exchange. Plays a role in 16S rRNA processing and 30S ribosomal subunit biogenesis and possibly also in cell cycle regulation and energy metabolism. The chain is GTPase Era from Pseudomonas fluorescens (strain ATCC BAA-477 / NRRL B-23932 / Pf-5).